The following is a 160-amino-acid chain: Cyclic pyranopterin monophosphate synthase (160 aa).

Substrate-binding positions include 75-77 (LCH) and 113-114 (ME). Residue D128 is part of the active site.

The protein belongs to the MoaC family. Homohexamer; trimer of dimers.

The catalysed reaction is (8S)-3',8-cyclo-7,8-dihydroguanosine 5'-triphosphate = cyclic pyranopterin phosphate + diphosphate. Its pathway is cofactor biosynthesis; molybdopterin biosynthesis. Functionally, catalyzes the conversion of (8S)-3',8-cyclo-7,8-dihydroguanosine 5'-triphosphate to cyclic pyranopterin monophosphate (cPMP). The chain is Cyclic pyranopterin monophosphate synthase from Methylobacterium sp. (strain 4-46).